The primary structure comprises 303 residues: Protoheme IX farnesyltransferase (303 aa).

The next 9 membrane-spanning stretches (helical) occupy residues 30–50, 54–74, 101–121, 123–143, 150–170, 178–198, 219–241, 245–262, and 279–299; these read VMSL…STVS, AMIA…LNMW, ALIF…YFAN, ISAV…TIWL, NIVI…TIAT, ITFF…LSLY, STKI…PYAI, GLVF…YNIL, and AKTI…IFLI.

The protein belongs to the UbiA prenyltransferase family. Protoheme IX farnesyltransferase subfamily.

It is found in the cell inner membrane. The catalysed reaction is heme b + (2E,6E)-farnesyl diphosphate + H2O = Fe(II)-heme o + diphosphate. It functions in the pathway porphyrin-containing compound metabolism; heme O biosynthesis; heme O from protoheme: step 1/1. Functionally, converts heme B (protoheme IX) to heme O by substitution of the vinyl group on carbon 2 of heme B porphyrin ring with a hydroxyethyl farnesyl side group. The polypeptide is Protoheme IX farnesyltransferase (Pelagibacter ubique (strain HTCC1062)).